We begin with the raw amino-acid sequence, 442 residues long: Protoheme IX farnesyltransferase (442 aa).

The unknown stretch occupies residues 1-167; the sequence is MGVYSLLVLG…AYVQLMKPRL (167 aa). The next 11 helical transmembrane spans lie at 49 to 69, 76 to 96, 106 to 126, 167 to 187, 194 to 214, 245 to 265, 267 to 287, 308 to 328, 365 to 385, 386 to 406, and 421 to 441; these read AAAL…RTGA, AVTL…YTAM, VHLT…AWTL, LMWL…SQLG, AATV…SGTF, LAFG…VNLL, AVLG…VLKP, WVAV…VIFL, HIVY…ELTG, LGPL…YFAI, and FHAS…DTMV. Residues 168-439 form a prenyltransferase region; that stretch reads MWLLCLVAGA…CLLVAVVLDT (272 aa).

The protein in the C-terminal section; belongs to the UbiA prenyltransferase family. Protoheme IX farnesyltransferase subfamily.

It is found in the cell membrane. It carries out the reaction heme b + (2E,6E)-farnesyl diphosphate + H2O = Fe(II)-heme o + diphosphate. It functions in the pathway porphyrin-containing compound metabolism; heme O biosynthesis; heme O from protoheme: step 1/1. In terms of biological role, converts heme B (protoheme IX) to heme O by substitution of the vinyl group on carbon 2 of heme B porphyrin ring with a hydroxyethyl farnesyl side group. The protein is Protoheme IX farnesyltransferase (ctaB) of Halobacterium salinarum (strain ATCC 700922 / JCM 11081 / NRC-1) (Halobacterium halobium).